The sequence spans 421 residues: Type II methyltransferase M.SfiI (421 aa).

The protein belongs to the N(4)/N(6)-methyltransferase family. N(4) subfamily.

The enzyme catalyses a 2'-deoxycytidine in DNA + S-adenosyl-L-methionine = an N(4)-methyl-2'-deoxycytidine in DNA + S-adenosyl-L-homocysteine + H(+). In terms of biological role, a beta subtype methylase, recognizes the double-stranded sequence 5'-GGCCNNNNNGGCC-3', methylates C-? on both strands, and protects the DNA from cleavage by the SfiI endonuclease. The chain is Type II methyltransferase M.SfiI from Streptomyces fimbriatus.